A 239-amino-acid polypeptide reads, in one-letter code: Putative CRISPR-associated endoribonuclease-like protein Cas6nc (239 aa).

The protein belongs to the CRISPR-associated protein Cas6/Cse3/CasE family. As to quaternary structure, monomer; homodimer when crystallized in the presence of crRNA. Varying the crRNA sequence varies degree of oligomerization and structure.

Functionally, CRISPR (clustered regularly interspaced short palindromic repeat), is an adaptive immune system that provides protection against mobile genetic elements (viruses, transposable elements and conjugative plasmids). CRISPR clusters contain sequences complementary to antecedent mobile elements and target invading nucleic acids. CRISPR clusters are transcribed and processed into CRISPR RNA (crRNA), also called psiRNA (prokaryotic silencing) in this organism (Potential). The protein is Putative CRISPR-associated endoribonuclease-like protein Cas6nc (cas6nc) of Pyrococcus horikoshii (strain ATCC 700860 / DSM 12428 / JCM 9974 / NBRC 100139 / OT-3).